We begin with the raw amino-acid sequence, 97 residues long: Small ribosomal subunit protein bS20 (97 aa).

The protein belongs to the bacterial ribosomal protein bS20 family.

Binds directly to 16S ribosomal RNA. The chain is Small ribosomal subunit protein bS20 from Prochlorococcus marinus (strain MIT 9215).